We begin with the raw amino-acid sequence, 816 residues long: Sodium/hydrogen exchanger 1 (816 aa).

Over 1-98 (MLLWSAVRGL…FPVLGIDYTH (98 aa)) the chain is Extracellular. A compositionally biased stretch (polar residues) spans 37–50 (LQLSPTDSTTPDSQ). Residues 37–79 (LQLSPTDSTTPDSQPSRERSIGDVTTAPPEVTPESRPVNRSVT) form a disordered region. Asparagine 75 carries N-linked (GlcNAc...) asparagine glycosylation. A helical transmembrane segment spans residues 99–121 (VRTPFEISLWILLACLMKIGFHV). Over 122–130 (IPTISSIVP) the chain is Cytoplasmic. The helical transmembrane segment at 131-148 (ESCLLIVVGLLVGGLIKG) threads the bilayer. Topologically, residues 149–158 (VGEKPPFLQS) are extracellular. Residues 159-176 (EVFFLFLLPPIILDAGYF) traverse the membrane as a helical segment. The Cytoplasmic portion of the chain corresponds to 177–186 (LPLRQFTENL). The helical transmembrane segment at 187-215 (GTILIFAVVGTLWNAFFLGGLMYAVCLVG) threads the bilayer. Topologically, residues 216-222 (GEQINNI) are extracellular. A helical membrane pass occupies residues 223 to 249 (GLLDNLLFGSIISAVDPVAVLAVFEEI). Topologically, residues 250–252 (HIN) are cytoplasmic. The helical transmembrane segment at 253 to 283 (ELLHILVFGESLLNDAVTVVLYHLFEEFANY) threads the bilayer. The Extracellular portion of the chain corresponds to 284–287 (DHVG). A helical transmembrane segment spans residues 288-322 (IVDIVLGFLSFFVVALGGVFVGVVYGVIAAFTSRF). Topologically, residues 323-328 (TAHIRV) are cytoplasmic. Residues 329–341 (IEPLFVFLYSYMA) traverse the membrane as a helical segment. Topologically, residues 342–350 (YLSAELFHL) are extracellular. The helical transmembrane segment at 351–371 (SGIMALIASGVVMRPYVEANI) threads the bilayer. Residues 372–373 (SH) are Cytoplasmic-facing. The helical transmembrane segment at 374 to 404 (KSHTTIKYFLKMWSSVSETLIFIFLGVSTVA) threads the bilayer. Residues 405-410 (GSHHWN) are Extracellular-facing. The chain crosses the membrane as a helical span at residues 411–438 (WTFVISTLLFCLIARVLGVLGLTWFINK). Topologically, residues 439-444 (FRIVKL) are cytoplasmic. The chain crosses the membrane as a helical span at residues 445 to 469 (TPKDQFIIAYGGLRGAIAFSLGYLL). Residues 470–475 (DKKHFP) are Extracellular-facing. A helical transmembrane segment spans residues 476 to 505 (MCDLFLTAIITVIFFTVFVQGMTIRPLVDL). The interval 503–545 (VDLLAVKKKQETKRSINEEIHTQFLDHLLTGIEDICGHYGHHH) is interaction with TESC. Over 506 to 816 (LAVKKKQETK…EGEPFIPKGQ (311 aa)) the chain is Cytoplasmic. The interval 509-516 (KKKQETKR) is PI(4,5)P2-binding region. Residues 515 to 545 (KRSINEEIHTQFLDHLLTGIEDICGHYGHHH) are interaction with CHP2. The tract at residues 540 to 545 (HYGHHH) is confers pH-dependent PI(4,5)P2 binding. The interval 552–560 (RFNKKYVKK) is PI(4,5)P2-binding region. Phosphoserine is present on residues serine 599 and serine 602. A Phosphothreonine modification is found at threonine 603. Phosphoserine occurs at positions 605 and 648. An interaction with TESC region spans residues 633 to 816 (KILRNNLQKT…EGEPFIPKGQ (184 aa)). Residues 633-816 (KILRNNLQKT…EGEPFIPKGQ (184 aa)) form an interaction with CALM1 region. Residues 684–687 (LTVP) form an interaction with PPP3CA region. Phosphoserine occurs at positions 693, 697, and 703. The segment at 715–720 (PVITID) is interaction with PPP3CA. 6 positions are modified to phosphoserine: serine 723, serine 726, serine 729, serine 786, serine 788, and serine 797. The interval 748–816 (PRVAEEAAEE…EGEPFIPKGQ (69 aa)) is disordered. The span at 783–792 (PSDSPSSQRM) shows a compositional bias: polar residues.

Belongs to the monovalent cation:proton antiporter 1 (CPA1) transporter (TC 2.A.36) family. Homodimer; dimerization is crucial for its function. Oligomer. Interacts with CALM in a calcium-dependent manner. Interacts with TESC. Interacts (via the juxtamembrane region of the cytoplasmic C-terminal domain) with CHP1; the interaction occurs at the plasma membrane in a calcium-dependent manner. Interacts with CHP2; the interaction occurs in a calcium-dependent manner. Interacts with EZR; regulates the cytoskeletal interactions of SLC9A1 and promotes stress fiber formation. Ubiquitinated, leading to its degradation by the proteasome. Ubiquitination is reduced by CHP1. In terms of processing, O-glycosylated. Post-translationally, palmitoylated; may play a major role in SLC9A1 regulation. Phosphorylation at Ser-648 by AKT1 reduces SLC9A1 binding to CALM1. In terms of tissue distribution, kidney and intestine.

Its subcellular location is the cell membrane. It is found in the basolateral cell membrane. The enzyme catalyses Na(+)(in) + H(+)(out) = Na(+)(out) + H(+)(in). It carries out the reaction Li(+)(out) + H(+)(in) = Li(+)(in) + H(+)(out). It catalyses the reaction Li(+)(in) + Na(+)(out) = Li(+)(out) + Na(+)(in). With respect to regulation, activated at acidic pHs. Inhibited by cariporide and eniporide. Phosphatidylinositol 4,5-bisphosphate (PI(4,5)P2) and phosphatidylinositol 3,4,5-trisphosphate (PI(3,4,5)P3) bind and differentially regulate SLC9A1 activity. Functionally, electroneutral Na(+) /H(+) antiporter that extrudes Na(+) in exchange for external protons driven by the inward sodium ion chemical gradient, protecting cells from acidification that occurs from metabolism. Exchanges intracellular H(+) ions for extracellular Na(+) in 1:1 stoichiometry. Plays a key role in maintening intracellular pH neutral and cell volume, and thus is important for cell growth, proliferation, migration and survival. In addition, can transport lithium Li(+) and functions also as a Na(+)/Li(+) antiporter. SLC9A1 also functions in membrane anchoring and organization of scaffolding complexes that coordinate signaling inputs. In Oryctolagus cuniculus (Rabbit), this protein is Sodium/hydrogen exchanger 1 (SLC9A1).